A 436-amino-acid polypeptide reads, in one-letter code: MQPPPDEARRDMAGDTQWSRPECQAWTGTLLLGTCLLYCARSSMPICTVSMSQDFGWNKKEAGIVLSSFFWGYCLTQVVGGHLGDRIGGEKVILLSASAWGSITAVTPLLAHLSSAHLAFMTFSRILMGLLQGVYFPALTSLLSQKVRESERAFTYSIVGAGSQFGTLLTGAVGSLLLEWYGWQSIFYFSGGLTLLWVWYVYRYLLSEKDLILALGVLAQSRPVSRHNRVPWRRLFRKPAVWAAVVSQLSAACSFFILLSWLPTFFEETFPDAKGWIFNVVPWLVAIPASLFSGFLSDHLINQGYRAITVRKLMQGMGLGLSSVFALCLGHTSSFCESVVFASASIGLQTFNHSGISVNIQDLAPSCAGFLFGVANTAGALAGVVGVCLGGYLMETTGSWTCLFNLVAIISNLGLCTFLVFGQAQRVDLSSTHEDL.

Helical transmembrane passes span 64–84 (IVLS…GHLG), 92–112 (VILL…LLAH), 118–138 (LAFM…YFPA), 158–178 (IVGA…SLLL), 181–201 (YGWQ…VWYV), 239–259 (PAVW…FILL), 276–296 (WIFN…SGFL), 316–336 (GMGL…SSFC), 369–389 (GFLF…GVCL), and 402–422 (CLFN…LVFG).

Belongs to the major facilitator superfamily. Sodium/anion cotransporter family. In terms of tissue distribution, widely expressed, but more predominantly in adrenal gland, brain and thyroid.

The protein localises to the cytoplasmic vesicle. Its subcellular location is the secretory vesicle. The protein resides in the chromaffin granule membrane. It localises to the secretory vesicle membrane. It is found in the lysosome membrane. It catalyses the reaction ATP(in) = ATP(out). The catalysed reaction is ADP(in) = ADP(out). The enzyme catalyses GTP(in) = GTP(out). Its activity is regulated as follows. Activity is chloride-dependent. Inhibited by AMP-PNP, gammaS-ATP, diadenosine triphosphate, 4,4'- diisothiocyanatostilbene-2,2'-disulfonate (DIDS) and Evans blue. Its function is as follows. Voltage-gated ATP nucleotide uniporter that can also transport the purine nucleotides ADP and GTP. Uses the membrane potential as the driving force to control ATP accumulation in lysosomes and secretory vesicles. By controlling ATP storage in lysosomes, regulates ATP-dependent proteins of these organelles. Also indirectly regulates the exocytosis of ATP through its import into lysosomes in astrocytes and secretory vesicles such as adrenal chromaffin granules, mucin granules and synaptic vesicles. The polypeptide is Voltage-gated purine nucleotide uniporter SLC17A9 (Homo sapiens (Human)).